A 493-amino-acid chain; its full sequence is EGF-containing fibulin-like extracellular matrix protein 1 (493 aa).

An N-terminal signal peptide occupies residues 1 to 17 (MLKALFLTMLTLALVKS). Residues 26 to 71 (YTQCTDGYEWDPVRQQCKDIDECDIVPDACKGGMKCVNHYGGYLCL) enclose the EGF-like 1; atypical domain. Residues 173–213 (DIDECTAGTHNCRADQVCINLRGSFACQCPPGYQKRGEQCV) enclose the EGF-like 2; calcium-binding domain. Intrachain disulfides connect Cys-177-Cys-190, Cys-184-Cys-199, Cys-201-Cys-212, Cys-218-Cys-228, Cys-224-Cys-237, Cys-239-Cys-252, Cys-258-Cys-268, Cys-264-Cys-277, Cys-279-Cys-292, Cys-298-Cys-309, Cys-305-Cys-318, Cys-320-Cys-332, Cys-338-Cys-350, Cys-344-Cys-359, and Cys-365-Cys-377. The EGF-like 3; calcium-binding domain occupies 214–253 (DIDECTIPPYCHQRCVNTPGSFYCQCSPGFQLAANNYTCV). Asn-249 is a glycosylation site (N-linked (GlcNAc...) asparagine). Residues 254–293 (DINECDASNQCAQQCYNILGSFICQCNQGYELSSDRLNCE) enclose the EGF-like 4; calcium-binding domain. The tract at residues 259 to 493 (DASNQCAQQC…LTIIVGPFSF (235 aa)) is mediates interaction with TIMP3. One can recognise an EGF-like 5; calcium-binding domain in the interval 294–333 (DIDECRTSSYLCQYQCVNEPGKFSCMCPQGYQVVRSRTCQ). The EGF-like 6; calcium-binding domain maps to 334–378 (DINECETTNECREDEMCWNYHGGFRCYPRNPCQDPYILTPENRCV).

Belongs to the fibulin family. In terms of assembly, interacts with ECM1. Interacts with TIMP3. In the eye, associated with photoreceptor outer and inner segment regions, the nerve fiber layer, outer nuclear layer and inner and outer plexiform layers of the retina.

The protein localises to the secreted. Its subcellular location is the extracellular space. It localises to the extracellular matrix. In terms of biological role, binds EGFR, the EGF receptor, inducing EGFR autophosphorylation and the activation of downstream signaling pathways. May play a role in cell adhesion and migration. May function as a negative regulator of chondrocyte differentiation. In the olfactory epithelium, it may regulate glial cell migration, differentiation and the ability of glial cells to support neuronal neurite outgrowth. The polypeptide is EGF-containing fibulin-like extracellular matrix protein 1 (EFEMP1) (Homo sapiens (Human)).